A 502-amino-acid polypeptide reads, in one-letter code: Serine carboxypeptidase-like 40 (502 aa).

The signal sequence occupies residues methionine 1–serine 24. Asparagine 103 and asparagine 187 each carry an N-linked (GlcNAc...) asparagine glycan. 3 disulfides stabilise this stretch: cysteine 136/cysteine 384, cysteine 293/cysteine 307, and cysteine 331/cysteine 352. Residue serine 229 is part of the active site. N-linked (GlcNAc...) asparagine glycans are attached at residues asparagine 333 and asparagine 373. Residue aspartate 420 is part of the active site. A glycan (N-linked (GlcNAc...) asparagine) is linked at asparagine 436. The active site involves histidine 473.

It belongs to the peptidase S10 family. Expressed in roots, leaves, flowers and siliques.

Its subcellular location is the secreted. In terms of biological role, probable carboxypeptidase. This is Serine carboxypeptidase-like 40 (SCPL40) from Arabidopsis thaliana (Mouse-ear cress).